The sequence spans 752 residues: MGPLMVLFCLLFLYPGLADSAPSCPQNVNISGGTFTLSHGWAPGSLLTYSCPQGLYPSPASRLCKSSGQWQTPGATRSLSKAVCKPVRCPAPVSFENGIYTPRLGSYPVGGNVSFECEDGFILRGSPVRHCCPNGMWDGETAVCDNGAGHCPNPGISLGAVRTGFRFGHGDKVRYRCSSNLVLTGSSERECQGNGVWSGTEPICRQPYSYDFPEDVAPALGTSFSHMLGATNPTQKTKESLGRKIQIQRSGHLNLYLLLDCSQSVSENDFLIFKESASLMVDRIFSFEINVSVAIITFASEPRVLMSVLNDNSRDMTEVISSLENANYKDHENGTGTNTYAALNSVYLMMNNQMRLLGMETMAWQEIRHAIILLTDGKSNMGGSPKTAVDHIREILNINQKRNDYLDIYAIGVGKLDVDWRELNELGSKKDGERHAFILQDTKALHQVFEHMLDVSKLTDTICGVGNMSANASDQERTPWHVTIKPKSQETCRGALISDQWVLTAAHCFRDGNDHSLWRVNVGDPKSRWGKEFLIEKAVISPGFDVFAKKNQGILEFYGDDIALLKLAQKVKMSTHARPICLPCTMEANLALRRPQGSTCRDHENELLNKQSVPAHFVALNGSKLNINLKMGVEWTSCAEVVSQEKTMFPNLTDVREVVTDQFLCSGTQEDESPCKGESGGAVFLERRFRFFQVGLVSWGLYNPCLGSADKNSRKRAPRSKVPPPRDFHINLFRMQPWLRQHLGDVLNFLPL.

The first 20 residues, 1-20 (MGPLMVLFCLLFLYPGLADS), serve as a signal peptide directing secretion. 3 consecutive Sushi domains span residues 22–86 (PSCP…VCKP), 87–146 (VRCP…VCDN), and 149–206 (GHCP…ICRQ). Intrachain disulfides connect Cys-24–Cys-64, Cys-51–Cys-84, Cys-89–Cys-131, Cys-117–Cys-144, Cys-151–Cys-191, and Cys-177–Cys-204. Residue Asn-29 is glycosylated (N-linked (GlcNAc...) asparagine). Asn-112 carries an N-linked (GlcNAc...) asparagine glycan. In terms of domain architecture, VWFA spans 254–452 (NLYLLLDCSQ…KALHQVFEHM (199 aa)). Residues 260–264 (DCSQS) carry the MIDAS-like motif motif. Residues Ser-262 and Ser-264 each coordinate Mg(2+). N-linked (GlcNAc...) asparagine glycans are attached at residues Asn-290 and Asn-333. Thr-337 is a binding site for Mg(2+). 3 cysteine pairs are disulfide-bonded: Cys-463/Cys-581, Cys-492/Cys-508, and Cys-584/Cys-600. One can recognise a Peptidase S1 domain in the interval 464–744 (GVGNMSANAS…MQPWLRQHLG (281 aa)). N-linked (GlcNAc...) asparagine glycans are attached at residues Asn-467 and Asn-471. Residues His-507 and Asp-561 each act as charge relay system in the active site. N-linked (GlcNAc...) asparagine glycans are attached at residues Asn-621 and Asn-651. 2 cysteine pairs are disulfide-bonded: Cys-638–Cys-665 and Cys-675–Cys-705. Residue Ser-679 is the Charge relay system of the active site.

Belongs to the peptidase S1 family. Serine protease component of the C3 convertase, also named C4bC2b, composed of the serine protease complement C2b and complement C4b. Serine protease component of the C5 convertase, also named C4bC2bC3b, composed of the serine protease complement C2b, complement C3b, as well as complement C4b. Requires Mg(2+) as cofactor. Mn(2+) serves as cofactor. In terms of processing, cleaved and activated by different proteases depending on the complement pathway to generate complement C2a and serine protease complement C2b chains. Cleaved and activated by C1S following activation by the classical complement system. Cleaved and activated by MASP2 following activation by the lectin complement system. Cleaved and activated by GZMK following activation by the GZMK complement system.

Its subcellular location is the secreted. The protein localises to the cell surface. The enzyme catalyses Selective cleavage of Arg-|-Ser bond in complement component C3 alpha-chain to form C3a and C3b, and Arg-|-Xaa bond in complement component C5 alpha-chain to form C5a and C5b.. Its function is as follows. Precursor of the catalytic component of the C3 and C5 convertase complexes, which are part of the complement pathway, a cascade of proteins that leads to phagocytosis and breakdown of pathogens and signaling that strengthens the adaptive immune system. Component C2 is part of the classical, lectin and GZMK complement systems. Functionally, catalytic component of the complement C3 and C5 convertase complexes. Following complement activation, recruited to the surface of pathogens by complement C4b opsonin to form the C3 convertase, or C3b and C4b opsonins to form the C5 convertase. As part of the C3 convertase, cleaves and activate C3 into C3a anaphylatoxin and C3b opsonin, the next components of the complement pathways. As part of the C5 convertase, cleaves and activate C5 into C5a anaphylatoxin and C5b component of the membrane attack complex. This Pan troglodytes (Chimpanzee) protein is Complement C2.